Here is a 114-residue protein sequence, read N- to C-terminus: Protein U68 (114 aa).

It belongs to the herpesviridae UL96 family.

This chain is Protein U68 (U68), found in Human herpesvirus 6A (strain Uganda-1102) (HHV-6 variant A).